Consider the following 102-residue polypeptide: MDISIISDKNNPLLYRREIKFTVSFDAATPSIKDVKMKLVAVLNADKKVLVVDTLDQIFGKLEAEGYAKIYNDEKAMATIETKSVLEKNKIEEEAEAEVAEE.

This sequence belongs to the eukaryotic ribosomal protein eS24 family.

This chain is Small ribosomal subunit protein eS24, found in Methanococcus maripaludis (strain C7 / ATCC BAA-1331).